A 201-amino-acid polypeptide reads, in one-letter code: uncharacterized protein (201 aa).

As to quaternary structure, interacts with the chaperones HSP82 and HSC82.

This is an uncharacterized protein from Saccharomyces cerevisiae (strain ATCC 204508 / S288c) (Baker's yeast).